The primary structure comprises 134 residues: Interleukin-5 (134 aa).

An N-terminal signal peptide occupies residues 1-21 (MRMLLNLSLLALGAAYVSAFA). N-linked (GlcNAc...) asparagine glycans are attached at residues Asn76 and Asn90.

The protein belongs to the IL-5 family. Homodimer; disulfide-linked. Interacts with IL5RA. Interacts with CSF2RB.

It localises to the secreted. Functionally, homodimeric cytokine expressed predominantly by T-lymphocytes and NK cells that plays an important role in the survival, differentiation, and chemotaxis of eosinophils. Also acts on activated and resting B-cells to induce immunoglobulin production, growth, and differentiation. Mechanistically, exerts its biological effects through a receptor composed of IL5RA subunit and the cytokine receptor common subunit beta/CSF2RB. Binding to the receptor leads to activation of various kinases including LYN, SYK and JAK2 and thereby propagates signals through the RAS-MAPK and JAK-STAT5 pathways respectively. The polypeptide is Interleukin-5 (IL5) (Canis lupus familiaris (Dog)).